The following is a 178-amino-acid chain: Crossover junction endodeoxyribonuclease RuvC (178 aa).

Residues Asp-20, Glu-80, and Asp-154 contribute to the active site. Residues Asp-20, Glu-80, and Asp-154 each contribute to the Mg(2+) site.

This sequence belongs to the RuvC family. As to quaternary structure, homodimer which binds Holliday junction (HJ) DNA. The HJ becomes 2-fold symmetrical on binding to RuvC with unstacked arms; it has a different conformation from HJ DNA in complex with RuvA. In the full resolvosome a probable DNA-RuvA(4)-RuvB(12)-RuvC(2) complex forms which resolves the HJ. Mg(2+) serves as cofactor.

The protein localises to the cytoplasm. The enzyme catalyses Endonucleolytic cleavage at a junction such as a reciprocal single-stranded crossover between two homologous DNA duplexes (Holliday junction).. Functionally, the RuvA-RuvB-RuvC complex processes Holliday junction (HJ) DNA during genetic recombination and DNA repair. Endonuclease that resolves HJ intermediates. Cleaves cruciform DNA by making single-stranded nicks across the HJ at symmetrical positions within the homologous arms, yielding a 5'-phosphate and a 3'-hydroxyl group; requires a central core of homology in the junction. The consensus cleavage sequence is 5'-(A/T)TT(C/G)-3'. Cleavage occurs on the 3'-side of the TT dinucleotide at the point of strand exchange. HJ branch migration catalyzed by RuvA-RuvB allows RuvC to scan DNA until it finds its consensus sequence, where it cleaves and resolves the cruciform DNA. This chain is Crossover junction endodeoxyribonuclease RuvC, found in Rhodopirellula baltica (strain DSM 10527 / NCIMB 13988 / SH1).